The chain runs to 150 residues: SsrA-binding protein (150 aa).

The protein belongs to the SmpB family.

It is found in the cytoplasm. In terms of biological role, required for rescue of stalled ribosomes mediated by trans-translation. Binds to transfer-messenger RNA (tmRNA), required for stable association of tmRNA with ribosomes. tmRNA and SmpB together mimic tRNA shape, replacing the anticodon stem-loop with SmpB. tmRNA is encoded by the ssrA gene; the 2 termini fold to resemble tRNA(Ala) and it encodes a 'tag peptide', a short internal open reading frame. During trans-translation Ala-aminoacylated tmRNA acts like a tRNA, entering the A-site of stalled ribosomes, displacing the stalled mRNA. The ribosome then switches to translate the ORF on the tmRNA; the nascent peptide is terminated with the 'tag peptide' encoded by the tmRNA and targeted for degradation. The ribosome is freed to recommence translation, which seems to be the essential function of trans-translation. In Campylobacter curvus (strain 525.92), this protein is SsrA-binding protein.